A 219-amino-acid polypeptide reads, in one-letter code: Polysialic acid transport ATP-binding protein KpsT (219 aa).

Residues 2 to 218 (IKIENLTKSY…TEAIADYKKD (217 aa)) enclose the ABC transporter domain. 38 to 45 (GQNGAGKS) lines the ATP pocket.

The protein belongs to the ABC transporter superfamily.

It localises to the cell inner membrane. Putative ATP-binding protein, and an energy coupling component for the transport of polysialic acid across the cytoplasmic membrane. The chain is Polysialic acid transport ATP-binding protein KpsT (kpsT) from Escherichia coli.